A 148-amino-acid chain; its full sequence is MSEQQPRVIESKEIMTLLPHRYPFLLVDRVLDFKEGEWLKAIKNISVNEPCFTGHFPGEPILPGVLILEALAQAMGILAFKTLELKGGELFYFAGIDEARFKRPVLPGDQMELNVQVIKERRGITSFTGVATVNGEIACEAKLMCARR.

Histidine 55 is an active-site residue.

It belongs to the thioester dehydratase family. FabZ subfamily.

It is found in the cytoplasm. It carries out the reaction a (3R)-hydroxyacyl-[ACP] = a (2E)-enoyl-[ACP] + H2O. In terms of biological role, involved in unsaturated fatty acids biosynthesis. Catalyzes the dehydration of short chain beta-hydroxyacyl-ACPs and long chain saturated and unsaturated beta-hydroxyacyl-ACPs. The polypeptide is 3-hydroxyacyl-[acyl-carrier-protein] dehydratase FabZ (Haemophilus influenzae (strain 86-028NP)).